A 177-amino-acid chain; its full sequence is MFNIKMTISTLLIALIILVIIILVVFLYYKKQQPPKKVCKVDKDCGSGEHCVRGTCSTLSCLDAVKMDKRNIKIDSKISSCEFTPNFYRFTDTAADEQQEFGKTRHPIKITPSPSESHSPQEVCEKYCSWGTDDCTGWEYVGDEKEGTCYVYNNPHHPVLKYGKDHIIALPRNHKHA.

Residues 1 to 7 (MFNIKMT) are Intravirion-facing. A helical transmembrane segment spans residues 8–28 (ISTLLIALIILVIIILVVFLY). Topologically, residues 29 to 177 (YKKQQPPKKV…IALPRNHKHA (149 aa)) are virion surface.

This sequence belongs to the asfivirus inner membrane protein p22 family.

Its subcellular location is the virion membrane. It is found in the host cell membrane. This chain is Inner membrane protein p22, found in Ornithodoros (relapsing fever ticks).